Consider the following 317-residue polypeptide: MSEERGMKEQTISEMAQEMAHTTSEGLKKRIRKLYTFDELPAWQKDNELILSGYVRETNSVKECLRAMTYFNNESINIYTHLIPGVAYLVLFLIFADLVLAQLLPGLDAGEHRMLRFYLLGAFTCLACSSCFHCLKQHSEPHSRLWSKVDYLGILAQITCSTISLLYYGYHSYPSHFVFFSTLTVALCSACAVLVLNDSFNTVAFRPLRAFLFMAFGLSGVIPVLAGSYQFGFAEWAARIQLKYVLYEAVFYITGALVYGFRIPERFAPGKFDMVGHSHQIFHLLVVLGTLCHFRAVTGSYIFICTGKHYSSLLMFI.

At 1–80 (MSEERGMKEQ…FNNESINIYT (80 aa)) the chain is on the lumenal side. Asparagine 73 carries an N-linked (GlcNAc...) asparagine glycan. Residues 81-101 (HLIPGVAYLVLFLIFADLVLA) traverse the membrane as a helical segment. The Cytoplasmic segment spans residues 102–113 (QLLPGLDAGEHR). Residues 114 to 136 (MLRFYLLGAFTCLACSSCFHCLK) traverse the membrane as a helical segment. At 137-148 (QHSEPHSRLWSK) the chain is on the lumenal side. A helical membrane pass occupies residues 149 to 169 (VDYLGILAQITCSTISLLYYG). Residues 170–175 (YHSYPS) are Cytoplasmic-facing. The helical transmembrane segment at 176 to 196 (HFVFFSTLTVALCSACAVLVL) threads the bilayer. The N-linked (GlcNAc...) asparagine glycan is linked to asparagine 197. At 197 to 210 (NDSFNTVAFRPLRA) the chain is on the lumenal side. Residues 211–231 (FLFMAFGLSGVIPVLAGSYQF) form a helical membrane-spanning segment. Topologically, residues 232–243 (GFAEWAARIQLK) are cytoplasmic. The chain crosses the membrane as a helical span at residues 244–264 (YVLYEAVFYITGALVYGFRIP). The Lumenal portion of the chain corresponds to 265 to 283 (ERFAPGKFDMVGHSHQIFH). A helical transmembrane segment spans residues 284–304 (LLVVLGTLCHFRAVTGSYIFI). At 305–317 (CTGKHYSSLLMFI) the chain is on the cytoplasmic side.

Belongs to the ADIPOR family.

The protein resides in the endoplasmic reticulum membrane. Its function is as follows. ADIPOR-like receptor involved in zinc metabolism either by altering membrane sterol content or by directly altering cellular zinc levels. The polypeptide is ADIPOR-like receptor IZH1 (IZH1) (Eremothecium gossypii (strain ATCC 10895 / CBS 109.51 / FGSC 9923 / NRRL Y-1056) (Yeast)).